A 704-amino-acid polypeptide reads, in one-letter code: Inhibitor of carbonic anhydrase (704 aa).

The first 19 residues, 1–19, serve as a signal peptide directing secretion; that stretch reads MRLAFCVLLCAGSLGLCLA. 2 consecutive Transferrin-like domains span residues 25–347 and 357–689; these read VRWC…HLRR and VMWC…NVRQ. 16 disulfide bridges follow: C28–C67, C38–C58, C137–C213, C172–C188, C175–C196, C185–C198, C246–C260, C360–C392, C370–C383, C417–C699, C440–C662, C472–C549, C496–C690, C506–C520, C517–C532, and C589–C603. N-linked (GlcNAc...) asparagine glycosylation is present at N491.

It belongs to the transferrin family. As to quaternary structure, monomer. Interacts (via transferrin-like domain 2) with CA2. N-glycosylated. As to expression, blood plasma (at protein level).

The protein resides in the secreted. Functionally, inhibitor for carbonic anhydrase 2 (CA2). Does not bind iron ions. The polypeptide is Inhibitor of carbonic anhydrase (Sus scrofa (Pig)).